The sequence spans 440 residues: MSEFSQTVPELVAWARKNDFSISLPVDRLSFLLAVATLNGERLDGEMSEGELVDAFRHVSDAFEQTSETIGVRANNAINDMVRQRLLNRFTSEQAEGNAIYRLTPLGIGITDYYIRQREFSTLRLSMQLSIVAGELKRAADAAEEGGDEFHWHRNVYAPLKYSVAEIFDSIDLTQRLMDEQQQQVKDDIAQLLNKDWRAAISSCELLLSETSGTLRELQDTLEAAGDKLQANLLRIQDATMTHDDLHFVDRLVFDLQSKLDRIISWGQQSIDLWIGYDRHVHKFIRTAIDMDKNRVFAQRLRQSVQTYFDEPWALTYANADRLLDMRDEEMALRDEEVTGELPEDLEYEEFNEIREQLAAIIEEQLAVYKTRQVPLDLGLVVREYLSQYPRARHFDVARIVIDQAVRLGVAQADFTGLPAKWQPINDYGAKVQAHVIDKY.

Residues L208–I236 form a leucine-zipper region.

This sequence belongs to the MukF family. Interacts, and probably forms a ternary complex, with MukE and MukB via its C-terminal region. The complex formation is stimulated by calcium or magnesium. It is required for an interaction between MukE and MukB.

The protein localises to the cytoplasm. It is found in the nucleoid. Involved in chromosome condensation, segregation and cell cycle progression. May participate in facilitating chromosome segregation by condensation DNA from both sides of a centrally located replisome during cell division. Not required for mini-F plasmid partitioning. Probably acts via its interaction with MukB and MukE. Overexpression results in anucleate cells. It has a calcium binding activity. The protein is Chromosome partition protein MukF of Escherichia coli O17:K52:H18 (strain UMN026 / ExPEC).